The sequence spans 228 residues: NAD(P)H-hydrate epimerase (228 aa).

The region spanning 9–215 (AISIDEELFN…RLEEKYSLEL (207 aa)) is the YjeF N-terminal domain. 58–62 (NNGGD) contacts (6S)-NADPHX. K(+) contacts are provided by N59 and D123. (6S)-NADPHX contacts are provided by residues 127–133 (GFSFKPP) and D156. A K(+)-binding site is contributed by S159.

Belongs to the NnrE/AIBP family. Requires K(+) as cofactor.

The catalysed reaction is (6R)-NADHX = (6S)-NADHX. It carries out the reaction (6R)-NADPHX = (6S)-NADPHX. In terms of biological role, catalyzes the epimerization of the S- and R-forms of NAD(P)HX, a damaged form of NAD(P)H that is a result of enzymatic or heat-dependent hydration. This is a prerequisite for the S-specific NAD(P)H-hydrate dehydratase to allow the repair of both epimers of NAD(P)HX. This chain is NAD(P)H-hydrate epimerase, found in Anopheles darlingi (Mosquito).